Reading from the N-terminus, the 223-residue chain is Small ribosomal subunit protein uS3 (223 aa).

Positions 39 to 107 (IRQFLRKKPS…EVWLEIAEIK (69 aa)) constitute a KH type-2 domain.

This sequence belongs to the universal ribosomal protein uS3 family. Part of the 30S ribosomal subunit. Forms a tight complex with proteins S10 and S14.

Its function is as follows. Binds the lower part of the 30S subunit head. Binds mRNA in the 70S ribosome, positioning it for translation. The chain is Small ribosomal subunit protein uS3 from Chlamydia pneumoniae (Chlamydophila pneumoniae).